The following is a 360-amino-acid chain: Phospho-N-acetylmuramoyl-pentapeptide-transferase (360 aa).

10 helical membrane passes run Val18–Leu38, Thr73–Leu93, Ser94–Val114, Tyr134–Gly154, Leu168–Ser188, Gly199–Thr219, Leu239–Tyr259, Val263–Leu283, Leu288–Val308, and Val338–Lys358.

It belongs to the glycosyltransferase 4 family. MraY subfamily. Requires Mg(2+) as cofactor.

The protein resides in the cell inner membrane. The catalysed reaction is UDP-N-acetyl-alpha-D-muramoyl-L-alanyl-gamma-D-glutamyl-meso-2,6-diaminopimeloyl-D-alanyl-D-alanine + di-trans,octa-cis-undecaprenyl phosphate = di-trans,octa-cis-undecaprenyl diphospho-N-acetyl-alpha-D-muramoyl-L-alanyl-D-glutamyl-meso-2,6-diaminopimeloyl-D-alanyl-D-alanine + UMP. Its pathway is cell wall biogenesis; peptidoglycan biosynthesis. In terms of biological role, catalyzes the initial step of the lipid cycle reactions in the biosynthesis of the cell wall peptidoglycan: transfers peptidoglycan precursor phospho-MurNAc-pentapeptide from UDP-MurNAc-pentapeptide onto the lipid carrier undecaprenyl phosphate, yielding undecaprenyl-pyrophosphoryl-MurNAc-pentapeptide, known as lipid I. The polypeptide is Phospho-N-acetylmuramoyl-pentapeptide-transferase (Colwellia psychrerythraea (strain 34H / ATCC BAA-681) (Vibrio psychroerythus)).